We begin with the raw amino-acid sequence, 155 residues long: Ribosomal RNA large subunit methyltransferase H (155 aa).

Residues Leu-72, Gly-103, and 122 to 127 contribute to the S-adenosyl-L-methionine site; that span reads LSPLTL.

Belongs to the RNA methyltransferase RlmH family. As to quaternary structure, homodimer.

It localises to the cytoplasm. It carries out the reaction pseudouridine(1915) in 23S rRNA + S-adenosyl-L-methionine = N(3)-methylpseudouridine(1915) in 23S rRNA + S-adenosyl-L-homocysteine + H(+). Its function is as follows. Specifically methylates the pseudouridine at position 1915 (m3Psi1915) in 23S rRNA. The sequence is that of Ribosomal RNA large subunit methyltransferase H from Haemophilus ducreyi (strain 35000HP / ATCC 700724).